The primary structure comprises 337 residues: ATP-dependent 6-phosphofructokinase (337 aa).

Gly-11 lines the ATP pocket. An ADP-binding site is contributed by Arg-21–Arg-25. ATP contacts are provided by residues Arg-72 to Tyr-73 and Gly-102 to Ser-105. A Mg(2+)-binding site is contributed by Asp-103. Thr-125 to Asp-127 is a binding site for substrate. Catalysis depends on Asp-127, which acts as the Proton acceptor. Residue Arg-154 participates in ADP binding. Substrate contacts are provided by residues Arg-162 and Met-169–Arg-171. Residues Gly-185–Asp-187 and Lys-214–His-216 each bind ADP. Substrate contacts are provided by residues Glu-223, Arg-245, and His-251–Arg-254.

Belongs to the phosphofructokinase type A (PFKA) family. ATP-dependent PFK group I subfamily. Prokaryotic clade 'B1' sub-subfamily. Homotetramer. Mg(2+) serves as cofactor.

It is found in the cytoplasm. It carries out the reaction beta-D-fructose 6-phosphate + ATP = beta-D-fructose 1,6-bisphosphate + ADP + H(+). It functions in the pathway carbohydrate degradation; glycolysis; D-glyceraldehyde 3-phosphate and glycerone phosphate from D-glucose: step 3/4. Its activity is regulated as follows. Allosterically activated by ADP and other diphosphonucleosides, and allosterically inhibited by phosphoenolpyruvate. In terms of biological role, catalyzes the phosphorylation of D-fructose 6-phosphate to fructose 1,6-bisphosphate by ATP, the first committing step of glycolysis. This chain is ATP-dependent 6-phosphofructokinase, found in Streptococcus mutans serotype c (strain ATCC 700610 / UA159).